The sequence spans 597 residues: Elongation factor 4 (597 aa).

The tr-type G domain occupies 2 to 184 (KHIRNFSIIA…NIVSAIPAPE (183 aa)). GTP contacts are provided by residues 14-19 (DHGKST) and 131-134 (NKID).

This sequence belongs to the TRAFAC class translation factor GTPase superfamily. Classic translation factor GTPase family. LepA subfamily.

It localises to the cell inner membrane. The catalysed reaction is GTP + H2O = GDP + phosphate + H(+). Its function is as follows. Required for accurate and efficient protein synthesis under certain stress conditions. May act as a fidelity factor of the translation reaction, by catalyzing a one-codon backward translocation of tRNAs on improperly translocated ribosomes. Back-translocation proceeds from a post-translocation (POST) complex to a pre-translocation (PRE) complex, thus giving elongation factor G a second chance to translocate the tRNAs correctly. Binds to ribosomes in a GTP-dependent manner. This Vibrio campbellii (strain ATCC BAA-1116) protein is Elongation factor 4.